We begin with the raw amino-acid sequence, 694 residues long: Prolyl 3-hydroxylase 2 (694 aa).

An N-terminal signal peptide occupies residues 1–23 (MAPGSRSWGAVLLLAAMLPAACG). TPR repeat units follow at residues 35–68 (FDALYASGVEAYYGGDFAGAARCLEQALRSRREL), 136–169 (RVPYSYLQRAYIQLNKLEEAANAAHTFFMANPEH), 196–229 (HMEDYSAGVRHYDKEEYGLAITFLERALEGYYAE), and 292–325 (PLHYDYLQFAYYRVGDYVKALECARSYLLFHPDD). Residues 386-418 (KRYGARQDEHSVPSSISSEPEDGPRLSLTKKPT) are a coiled coil. The interval 395–427 (HSVPSSISSEPEDGPRLSLTKKPTPKPDRELKE) is disordered. Residues Asn-446 and Asn-535 are each glycosylated (N-linked (GlcNAc...) asparagine). The 115-residue stretch at 543–657 (THLVCRTALS…RCAVALWFTL (115 aa)) folds into the Fe2OG dioxygenase domain. Fe cation-binding residues include His-566, Asp-568, and His-638. Arg-648 is a catalytic residue. The Prevents secretion from ER signature appears at 691-694 (KDEL).

This sequence belongs to the leprecan family. It depends on Fe cation as a cofactor. L-ascorbate serves as cofactor.

Its subcellular location is the endoplasmic reticulum. The protein resides in the sarcoplasmic reticulum. It localises to the golgi apparatus. The catalysed reaction is L-prolyl-[collagen] + 2-oxoglutarate + O2 = trans-3-hydroxy-L-prolyl-[collagen] + succinate + CO2. Functionally, prolyl 3-hydroxylase that catalyzes the post-translational formation of 3-hydroxyproline on collagens. Contributes to proline 3-hydroxylation of collagen COL4A1 and COL1A1 in tendons, the eye sclera and in the eye lens capsule. Has high activity with the type IV collagen COL4A1, and lower activity with COL1A1. Catalyzes hydroxylation of the first Pro in Gly-Pro-Hyp sequences where Hyp is 4-hydroxyproline. Has no activity on substrates that lack 4-hydroxyproline in the third position. The polypeptide is Prolyl 3-hydroxylase 2 (Gallus gallus (Chicken)).